A 588-amino-acid polypeptide reads, in one-letter code: Protein kinase C iota type (588 aa).

Residues 18 to 101 (QVRVKAYYRG…SELIIHVFPC (84 aa)) form the PB1 domain. The Phorbol-ester/DAG-type zinc finger occupies 133–183 (GHAFQAKRFNRRAHCAICTDRIWGLGRQGYKCINCKLLVHKKCHKLVTVEC). The segment at 194–213 (GRIDPGSTHPEHPDQVLGKK) is disordered. A Protein kinase domain is found at 246–514 (FDLLRVIGRG…FADIMAHPFF (269 aa)). ATP contacts are provided by residues 252-260 (IGRGSYAKV) and lysine 275. Aspartate 370 functions as the Proton acceptor in the catalytic mechanism. Threonine 404 and threonine 556 each carry phosphothreonine. Positions 515 to 586 (RNVDWDLMEQ…INPLLMSAEE (72 aa)) constitute an AGC-kinase C-terminal domain.

It belongs to the protein kinase superfamily. AGC Ser/Thr protein kinase family. PKC subfamily.

The enzyme catalyses L-seryl-[protein] + ATP = O-phospho-L-seryl-[protein] + ADP + H(+). It carries out the reaction L-threonyl-[protein] + ATP = O-phospho-L-threonyl-[protein] + ADP + H(+). Exhibits an elevated basal enzymatic activity and is not regulated by diacylglycerol, phosphatidylserine, phorbol esters or calcium ions. Two specific sites, Thr-404 (activation loop of the kinase domain) and Thr-556 (turn motif), need to be phosphorylated for its full activation. In terms of biological role, calcium- and diacylglycerol-independent serine/ threonine-protein kinase that plays a general protective role against apoptotic stimuli, is involved in NF-kappa-B activation, cell survival, differentiation and polarity, and contributes to the regulation of microtubule dynamics in the early secretory pathway. Is required for the formation and maintenance of the zonula adherens during early epithelial development and plays a critical role in organ morphogenesis and in regulating the orientation of cell division. Required for polarized epithelial organization, myocardium coherence and cell connectivity in the early somite stages. Required for heart cone tilt and development of circulatory architecture during embryogenesis. The sequence is that of Protein kinase C iota type (prkci) from Danio rerio (Zebrafish).